We begin with the raw amino-acid sequence, 381 residues long: Spindlin interactor and repressor of chromatin-binding protein (381 aa).

Lysine 49 participates in a covalent cross-link: Glycyl lysine isopeptide (Lys-Gly) (interchain with G-Cter in SUMO2). Phosphoserine occurs at positions 122 and 149. Over residues 148 to 158 (PSLPSLESGQD) the composition is skewed to polar residues. The tract at residues 148–170 (PSLPSLESGQDGQPDPISNPDPV) is disordered. Residues lysine 190 and lysine 221 each participate in a glycyl lysine isopeptide (Lys-Gly) (interchain with G-Cter in SUMO2) cross-link. Disordered regions lie at residues 203-270 (PVTP…TDGS), 285-320 (LRTTDCKDSSKDSRAAEGLPQPQNPSSASPPGLRGT), and 335-381 (AVSL…GSGV). The span at 219–229 (RWKESPENEPA) shows a compositional bias: basic and acidic residues. A phosphoserine mark is found at serine 249 and serine 252. Over residues 288-299 (TDCKDSSKDSRA) the composition is skewed to basic and acidic residues. Glycyl lysine isopeptide (Lys-Gly) (interchain with G-Cter in SUMO2) cross-links involve residues lysine 291 and lysine 295. Over residues 304–315 (PQPQNPSSASPP) the composition is skewed to low complexity. 2 positions are modified to phosphoserine: serine 310 and serine 313.

As to quaternary structure, interacts with SPIN1, SPIN2A, SPIN2B, SPIN3 and SPIN4. Interacts with TCF7L2 in a SPIN1-dependent manner. Interacts with PARP1; promoting PARP1 ADP-ribosyltransferase activity.

The protein localises to the nucleus. The protein resides in the chromosome. Its function is as follows. Chromatin protein that stabilizes SPIN1 and enhances its association with histone H3 trimethylated at both 'Lys-4' and 'Lys-9' (H3K4me3K9me3). Positively regulates poly-ADP-ribosylation in response to DNA damage; acts by facilitating PARP1 ADP-ribosyltransferase activity. The protein is Spindlin interactor and repressor of chromatin-binding protein of Mus musculus (Mouse).